A 195-amino-acid polypeptide reads, in one-letter code: Holliday junction branch migration complex subunit RuvA (195 aa).

The interval 1-66 is domain I; the sequence is MNYLIFKVIY…LIIKDLYGFR (66 aa). The segment at 67-141 is domain II; that stretch reads TYNERLLFID…KYINKVNDKN (75 aa). Position 141 (N141) is a region of interest, flexible linker. The interval 141–195 is domain III; the sequence is NNWAKELSIGLENLGYTKKDIEYAITKVKINSQQDIDISEIISSAIKEISLRHEN.

This sequence belongs to the RuvA family. As to quaternary structure, homotetramer. Forms an RuvA(8)-RuvB(12)-Holliday junction (HJ) complex. HJ DNA is sandwiched between 2 RuvA tetramers; dsDNA enters through RuvA and exits via RuvB. An RuvB hexamer assembles on each DNA strand where it exits the tetramer. Each RuvB hexamer is contacted by two RuvA subunits (via domain III) on 2 adjacent RuvB subunits; this complex drives branch migration. In the full resolvosome a probable DNA-RuvA(4)-RuvB(12)-RuvC(2) complex forms which resolves the HJ.

The protein resides in the cytoplasm. Its function is as follows. The RuvA-RuvB-RuvC complex processes Holliday junction (HJ) DNA during genetic recombination and DNA repair, while the RuvA-RuvB complex plays an important role in the rescue of blocked DNA replication forks via replication fork reversal (RFR). RuvA specifically binds to HJ cruciform DNA, conferring on it an open structure. The RuvB hexamer acts as an ATP-dependent pump, pulling dsDNA into and through the RuvAB complex. HJ branch migration allows RuvC to scan DNA until it finds its consensus sequence, where it cleaves and resolves the cruciform DNA. The polypeptide is Holliday junction branch migration complex subunit RuvA (Ureaplasma parvum serovar 3 (strain ATCC 27815 / 27 / NCTC 11736)).